A 68-amino-acid polypeptide reads, in one-letter code: DNA-directed RNA polymerase subunit Rpo10 (68 aa).

Residues C7, C10, C44, and C45 each coordinate Zn(2+).

Belongs to the archaeal Rpo10/eukaryotic RPB10 RNA polymerase subunit family. Part of the RNA polymerase complex. Zn(2+) is required as a cofactor.

The protein resides in the cytoplasm. The enzyme catalyses RNA(n) + a ribonucleoside 5'-triphosphate = RNA(n+1) + diphosphate. DNA-dependent RNA polymerase (RNAP) catalyzes the transcription of DNA into RNA using the four ribonucleoside triphosphates as substrates. The chain is DNA-directed RNA polymerase subunit Rpo10 from Methanococcus maripaludis (strain C7 / ATCC BAA-1331).